Here is a 79-residue protein sequence, read N- to C-terminus: D-alanyl carrier protein (79 aa).

The 77-residue stretch at 1–77 (MDVKAEVIEI…KIVEGVTELR (77 aa)) folds into the Carrier domain. Serine 35 is modified (O-(pantetheine 4'-phosphoryl)serine).

The protein belongs to the DltC family. In terms of processing, 4'-phosphopantetheine is transferred from CoA to a specific serine of apo-DCP.

Its subcellular location is the cytoplasm. Its pathway is cell wall biogenesis; lipoteichoic acid biosynthesis. Its function is as follows. Carrier protein involved in the D-alanylation of lipoteichoic acid (LTA). The loading of thioester-linked D-alanine onto DltC is catalyzed by D-alanine--D-alanyl carrier protein ligase DltA. The DltC-carried D-alanyl group is further transferred to cell membrane phosphatidylglycerol (PG) by forming an ester bond, probably catalyzed by DltD. D-alanylation of LTA plays an important role in modulating the properties of the cell wall in Gram-positive bacteria, influencing the net charge of the cell wall. This Streptococcus thermophilus (strain CNRZ 1066) protein is D-alanyl carrier protein.